The following is a 163-amino-acid chain: Phosphopantetheine adenylyltransferase (163 aa).

Residue T9 participates in substrate binding. Residues 9 to 10 and H17 each bind ATP; that span reads TF. Substrate is bound by residues K41, T73, and R87. ATP-binding positions include 88-90, E98, and 123-129; these read GLR and FSFISSS.

It belongs to the bacterial CoaD family. Homohexamer. Mg(2+) is required as a cofactor.

The protein resides in the cytoplasm. The catalysed reaction is (R)-4'-phosphopantetheine + ATP + H(+) = 3'-dephospho-CoA + diphosphate. The protein operates within cofactor biosynthesis; coenzyme A biosynthesis; CoA from (R)-pantothenate: step 4/5. Functionally, reversibly transfers an adenylyl group from ATP to 4'-phosphopantetheine, yielding dephospho-CoA (dPCoA) and pyrophosphate. The chain is Phosphopantetheine adenylyltransferase from Desulfitobacterium hafniense (strain DSM 10664 / DCB-2).